Consider the following 1664-residue polypeptide: MYND-type zinc finger-containing chromatin reader Zmynd8 (1664 aa).

3 stretches are compositionally biased toward low complexity: residues 1 to 16 (MESTDSSDSSGDSLKS), 30 to 40 (SPQPQLQSSSL), and 61 to 84 (SAPPGSANCSSNSSSSSPSNINVG). Disordered regions lie at residues 1–84 (MEST…INVG), 251–271 (SLSNSWSNDDKGPRRSNLRSE), and 295–323 (LALNTSGEGESSLFSDASDTKTTTAKTPE). A compositionally biased stretch (basic and acidic residues) spans 258-271 (NDDKGPRRSNLRSE). The segment covering 296 to 308 (ALNTSGEGESSLF) has biased composition (polar residues). Residues 309–320 (SDASDTKTTTAK) show a composition bias toward low complexity. The segment at 343 to 389 (DPFCWKCRGCGKLMPCSKCLRSFHSYCVRPATTKFDSSWKCPECQVI) adopts a PHD-type zinc-finger fold. Positions 346, 349, 358, 361, 366, 369, 383, and 386 each coordinate Zn(2+). Residues 401-504 (VSVDLLSQLL…KVCRQEANEI (104 aa)) enclose the Bromo domain. Residues Cys-507, Cys-510, and Cys-525 each contribute to the Zn(2+) site. One can recognise a PWWP domain in the interval 528–579 (PHLLLWAKLKGFPYWPAKAMGSSNSTLVNVRFFGKHDRAFVPVKDCFLYSAQ). Disordered stretches follow at residues 672-693 (KTKATESGNESDQSPSPTKKLS), 747-815 (ESVE…QNEN), 857-905 (KIPR…RQQE), and 919-1139 (TEVM…TNTS). Residues 676–690 (TESGNESDQSPSPTK) show a composition bias toward polar residues. The segment covering 775-784 (HKRKSKHARK) has biased composition (basic residues). A compositionally biased stretch (basic and acidic residues) spans 785–800 (QHDNQDNQIEEAEKTG). Residues 874–884 (IPLPTAPPPKQ) are compositionally biased toward pro residues. Over residues 935–952 (PANQPQTDQVPLQQETIT) the composition is skewed to polar residues. Residues 953–962 (AQPESQMPAA) show a composition bias toward low complexity. The span at 1006-1019 (PPMPLPMPPPPPLP) shows a compositional bias: pro residues. Over residues 1037 to 1053 (TTIQRVSQKQGGKSTDT) the composition is skewed to polar residues. Low complexity predominate over residues 1073–1097 (SPTHSPLLSTAPSPSASPKPTSTLA). Residues Cys-1399, Cys-1402, Cys-1410, Cys-1411, Cys-1417, Cys-1421, His-1429, and Cys-1433 each contribute to the Zn(2+) site. The MYND-type zinc-finger motif lies at 1399–1433 (CANCMREAQLYCCWNTSYCDYPCQQLHWPGHSATC). The tract at residues 1613 to 1648 (VPKATGRSGKNNSRMRQTYSNNINNSNPQGMRCNNN) is disordered. The segment covering 1620-1648 (SGKNNSRMRQTYSNNINNSNPQGMRCNNN) has biased composition (polar residues).

Its subcellular location is the nucleus. It localises to the chromosome. In terms of biological role, chromatin reader that recognizes specific histone signatures to regulate transcription. Plays a role in neuronal development. The chain is MYND-type zinc finger-containing chromatin reader Zmynd8 from Drosophila melanogaster (Fruit fly).